The chain runs to 85 residues: U4-theraphotoxin-Hhn1j (85 aa).

A signal peptide spans 1–22 (MKVTLIAILTCAAVLVLHTTAA). Positions 23–48 (EELEAESQLMEVGMPDTELAAVDEER) are excised as a propeptide. 3 cysteine pairs are disulfide-bonded: cysteine 52–cysteine 66, cysteine 56–cysteine 77, and cysteine 71–cysteine 82.

It belongs to the neurotoxin 12 (Hwtx-2) family. 02 (Hwtx-2) subfamily. In terms of tissue distribution, expressed by the venom gland.

The protein resides in the secreted. Its function is as follows. Postsynaptic neurotoxin. The sequence is that of U4-theraphotoxin-Hhn1j from Cyriopagopus hainanus (Chinese bird spider).